Consider the following 108-residue polypeptide: Large ribosomal subunit protein uL24 (108 aa).

It belongs to the universal ribosomal protein uL24 family. As to quaternary structure, part of the 50S ribosomal subunit.

One of two assembly initiator proteins, it binds directly to the 5'-end of the 23S rRNA, where it nucleates assembly of the 50S subunit. In terms of biological role, one of the proteins that surrounds the polypeptide exit tunnel on the outside of the subunit. The protein is Large ribosomal subunit protein uL24 of Desulfosudis oleivorans (strain DSM 6200 / JCM 39069 / Hxd3) (Desulfococcus oleovorans).